A 624-amino-acid chain; its full sequence is 1-deoxy-D-xylulose-5-phosphate synthase (624 aa).

Residues histidine 74 and 115-117 contribute to the thiamine diphosphate site; that span reads GHS. Residue aspartate 146 participates in Mg(2+) binding. Residues 147–148, asparagine 175, tyrosine 286, and glutamate 367 each bind thiamine diphosphate; that span reads GA. A Mg(2+)-binding site is contributed by asparagine 175.

The protein belongs to the transketolase family. DXPS subfamily. Homodimer. Requires Mg(2+) as cofactor. Thiamine diphosphate is required as a cofactor.

It catalyses the reaction D-glyceraldehyde 3-phosphate + pyruvate + H(+) = 1-deoxy-D-xylulose 5-phosphate + CO2. Its pathway is metabolic intermediate biosynthesis; 1-deoxy-D-xylulose 5-phosphate biosynthesis; 1-deoxy-D-xylulose 5-phosphate from D-glyceraldehyde 3-phosphate and pyruvate: step 1/1. Catalyzes the acyloin condensation reaction between C atoms 2 and 3 of pyruvate and glyceraldehyde 3-phosphate to yield 1-deoxy-D-xylulose-5-phosphate (DXP). The protein is 1-deoxy-D-xylulose-5-phosphate synthase of Alkaliphilus oremlandii (strain OhILAs) (Clostridium oremlandii (strain OhILAs)).